A 449-amino-acid polypeptide reads, in one-letter code: Sensor histidine protein kinase/phosphatase WalK (449 aa).

The Extracellular segment spans residues 1–13 (MLDLLKQTIFTRD). Residues 14–34 (FIFILILLGFILVVTLLLLEN) traverse the membrane as a helical segment. The HAMP domain occupies 35 to 87 (RRDNIQLKQINQKVKDLIAGDYSKVLDMQGGSEITNITNNLNDLSEVIRLTQE). Topologically, residues 35–449 (RRDNIQLKQI…EEVWEDEVED (415 aa)) are cytoplasmic. Residues 92-158 (ESKRLNSILF…YELRDLITQS (67 aa)) enclose the PAS domain. The PAC domain occupies 157–211 (QSPELLLDSQDINGEYLNLRVRFALIRRESGFISGLVAVLHDTTEQEKEERERRL). Positions 215–435 (NVSHELRTPL…TFTIVLPYDK (221 aa)) constitute a Histidine kinase domain. Phosphohistidine is present on His-218.

May form homodimers. May interact with serine/threonine-protein kinase StkP; the interaction may play a role in regulating Walk signal transduction. In terms of processing, autophosphorylated.

The protein localises to the membrane. The enzyme catalyses ATP + protein L-histidine = ADP + protein N-phospho-L-histidine.. In terms of biological role, member of the two-component regulatory system WalK/WalR that regulates genes involved in cell wall metabolism. Functions as a sensor protein kinase which is autophosphorylated at a histidine residue and transfers its phosphate group to WalR. In turn, WalR binds to the upstream promoter regions of target genes to positively and negatively regulate their expression. Required to maintain expression of WalRK regulon genes in exponentially growing cells, including peptidoglycan hydrolase pcsB. Phosphorylates WalR and also capable of dephosphorylation of WalR. WalK phosphatase activity is probably involved in preventing cross-talk from PnpS and other non-cognate sensor kinases during exponential growth. May be considered a potential virulence factor. The sequence is that of Sensor histidine protein kinase/phosphatase WalK from Streptococcus pneumoniae serotype 2 (strain D39 / NCTC 7466).